The sequence spans 417 residues: 3-oxo-isoapionate-4-phosphate decarboxylase (417 aa).

3 residues coordinate Mg(2+): lysine 177, aspartate 179, and glutamate 180. Lysine 177 carries the post-translational modification N6-carboxylysine.

Belongs to the RuBisCO large chain family. Requires Mg(2+) as cofactor.

It catalyses the reaction 3-oxoisoapionate 4-phosphate + H(+) = L-erythrulose 1-phosphate + CO2. The protein operates within carbohydrate metabolism. Involved in catabolism of D-apiose. Catalyzes the decarboxylation of 3-oxo-isoapionate 4-phosphate to L-erythrulose 1-phosphate. In Rhizobium etli (strain ATCC 51251 / DSM 11541 / JCM 21823 / NBRC 15573 / CFN 42), this protein is 3-oxo-isoapionate-4-phosphate decarboxylase.